The primary structure comprises 349 residues: Mitomycin biosynthesis 6-O-methyltransferase (349 aa).

Residues Ser-167, Gly-190, 213–214 (ER), 240–241 (DF), and Lys-255 each bind S-adenosyl-L-methionine. His-259 (proton acceptor) is an active-site residue. Asn-288 contributes to the substrate binding site.

This sequence belongs to the class I-like SAM-binding methyltransferase superfamily. Cation-independent O-methyltransferase family. COMT subfamily. As to quaternary structure, homodimer.

The enzyme catalyses 6-demethylmitomycin A + S-adenosyl-L-methionine = mitomycin A + S-adenosyl-L-homocysteine. It carries out the reaction 6-demethylmitomycin B + S-adenosyl-L-methionine = mitomycin B + S-adenosyl-L-homocysteine. Completely inhibited by Zn(2+) and Cu(2+). Involved in the biosynthesis of the quinone methoxy group present in the mitomycin A and B, which are used as anticancer agents. In vitro, catalyzes the 6-O-methylation of both C9-beta- and C9-alpha-configured 6-hydroxymitomycins via the transfer of the S-methyl group of S-adenosyl-L-methionine (AdoMet) to the 6-demethylmitomycin A and B. It can also use hydroxyquinone as substrate. The protein is Mitomycin biosynthesis 6-O-methyltransferase of Streptomyces lavendulae.